A 697-amino-acid chain; its full sequence is Polyribonucleotide nucleotidyltransferase (697 aa).

2 residues coordinate Mg(2+): D488 and D494. In terms of domain architecture, KH spans 555-614 (PTFEVITINPDKIRDVIGKGGATIRQITEETKAAIDIEDNGTVRVFGETKAAAKAAIAKI). An S1 motif domain is found at 624–692 (GKIYDGKVIR…NRGRIKLTMK (69 aa)).

It belongs to the polyribonucleotide nucleotidyltransferase family. Component of the RNA degradosome, which is a multiprotein complex involved in RNA processing and mRNA degradation. Mg(2+) serves as cofactor.

Its subcellular location is the cytoplasm. It carries out the reaction RNA(n+1) + phosphate = RNA(n) + a ribonucleoside 5'-diphosphate. Functionally, involved in mRNA degradation. Catalyzes the phosphorolysis of single-stranded polyribonucleotides processively in the 3'- to 5'-direction. In Acinetobacter baumannii (strain AB307-0294), this protein is Polyribonucleotide nucleotidyltransferase.